A 231-amino-acid chain; its full sequence is MKFFALTTLLAATASALPTSHPVQELEARQLGGGTTRNDLTNGNSASCADVIFIYARGSTETGNLGTLGPSIASKLESAFGRDGVWIQGVGGAYRATLGDNSLPRGTSSAAIREMLGLFQQANTKCPDATLIAGGYSQGAALGAASVEDLDSAIRDKIAGTVLFGYTKNLQNHGRIPNFPADRTKVFCNTGDLVCTGSLIIAAPHLTYGPDARGPAPEFLIEKVRAVRGSA.

The N-terminal stretch at 1-16 (MKFFALTTLLAATASA) is a signal peptide. Residues Cys-48 and Cys-126 are joined by a disulfide bond. Catalysis depends on Ser-137, which acts as the Nucleophile. Cys-188 and Cys-195 are joined by a disulfide. Residue Asp-192 is part of the active site. The active-site Proton donor/acceptor is the His-205.

Belongs to the cutinase family. The 2 disulfide bonds play a critical role in holding the catalytic residues in juxta-position; reduction of the disulfide bridges results in the complete inactivation of the enzyme.

The protein resides in the secreted. It catalyses the reaction cutin + H2O = cutin monomers.. In terms of biological role, catalyzes the hydrolysis of complex carboxylic polyesters found in the cell wall of plants. Degrades cutin, a macromolecule that forms the structure of the plant cuticle. Allows pathogenic fungi to penetrate through the cuticular barrier into the host plant during the initial stage of fungal infection. In Fusarium vanettenii (Neocosmospora pisi), this protein is Cutinase 2 (CUT2).